The primary structure comprises 362 residues: MALSTSAIGFEGYEKRLEISFFEAGIFSDPEGRGLRALSKEQLDKVLKPAECTIVSSLSNNEVDSYVLSESSLFVYPYKIIIKTCGTTKLLLSIPPILELADGLSLKVKSVKYTRGSFNFPEVQPYPHRNFSEEVAILDGYFGKLGTGSKAYVMGGAGKQQQWHVYSASAESAENTFPIYTLEMCMTGLDKKSASVFFKTQSSSAAVMTDASGIRKILPGSDICDFDFEPCGYSMNAVEGGTISTIHVTPEDGFSYASFEAMGYDFKDVNLDALIQRVLSCFQPAEFSVALHCDSIGEKLDSVFELDVKGYACGERSYEALGKGGSIMYCGFTSTGSCGSPRSTLLCCWSENEDQEGEKKHF.

Catalysis depends on residues glutamate 11 and glutamate 14. Residue serine 71 is the Schiff-base intermediate with substrate; via pyruvic acid of the active site. At serine 71 the chain carries Pyruvic acid (Ser); by autocatalysis. Cysteine 85 functions as the Proton donor; for catalytic activity in the catalytic mechanism. Catalysis depends on proton acceptor; for processing activity residues serine 234 and histidine 247.

The protein belongs to the eukaryotic AdoMetDC family. Pyruvate serves as cofactor. Post-translationally, is synthesized initially as an inactive proenzyme. Formation of the active enzyme involves a self-maturation process in which the active site pyruvoyl group is generated from an internal serine residue via an autocatalytic post-translational modification. Two non-identical subunits are generated from the proenzyme in this reaction, and the pyruvate is formed at the N-terminus of the alpha chain, which is derived from the carboxyl end of the proenzyme. The post-translation cleavage follows an unusual pathway, termed non-hydrolytic serinolysis, in which the side chain hydroxyl group of the serine supplies its oxygen atom to form the C-terminus of the beta chain, while the remainder of the serine residue undergoes an oxidative deamination to produce ammonia and the pyruvoyl group blocking the N-terminus of the alpha chain.

The enzyme catalyses S-adenosyl-L-methionine + H(+) = S-adenosyl 3-(methylsulfanyl)propylamine + CO2. It participates in amine and polyamine biosynthesis; S-adenosylmethioninamine biosynthesis; S-adenosylmethioninamine from S-adenosyl-L-methionine: step 1/1. The chain is S-adenosylmethionine decarboxylase proenzyme (SAMDC) from Ipomoea nil (Japanese morning glory).